We begin with the raw amino-acid sequence, 654 residues long: Threonine--tRNA ligase (654 aa).

The TGS domain maps to 1–63 (MASINVKFPD…TTDGSIEIIA (63 aa)). Residues 248 to 546 (DHRVIGNELD…LTEIYKGAFP (299 aa)) are catalytic. Residues Cys-342, His-393, and His-523 each coordinate Zn(2+).

It belongs to the class-II aminoacyl-tRNA synthetase family. As to quaternary structure, homodimer. Zn(2+) is required as a cofactor.

It localises to the cytoplasm. The catalysed reaction is tRNA(Thr) + L-threonine + ATP = L-threonyl-tRNA(Thr) + AMP + diphosphate + H(+). Its function is as follows. Catalyzes the attachment of threonine to tRNA(Thr) in a two-step reaction: L-threonine is first activated by ATP to form Thr-AMP and then transferred to the acceptor end of tRNA(Thr). Also edits incorrectly charged L-seryl-tRNA(Thr). The sequence is that of Threonine--tRNA ligase from Lactiplantibacillus plantarum (strain ATCC BAA-793 / NCIMB 8826 / WCFS1) (Lactobacillus plantarum).